The following is a 72-amino-acid chain: Translation initiation factor IF-1 (72 aa).

The S1-like domain maps to 1 to 72 (MAKEDVIEMQ…SKGRIVFRAR (72 aa)).

The protein belongs to the IF-1 family. As to quaternary structure, component of the 30S ribosomal translation pre-initiation complex which assembles on the 30S ribosome in the order IF-2 and IF-3, IF-1 and N-formylmethionyl-tRNA(fMet); mRNA recruitment can occur at any time during PIC assembly.

It localises to the cytoplasm. One of the essential components for the initiation of protein synthesis. Stabilizes the binding of IF-2 and IF-3 on the 30S subunit to which N-formylmethionyl-tRNA(fMet) subsequently binds. Helps modulate mRNA selection, yielding the 30S pre-initiation complex (PIC). Upon addition of the 50S ribosomal subunit IF-1, IF-2 and IF-3 are released leaving the mature 70S translation initiation complex. This is Translation initiation factor IF-1 from Pseudoalteromonas translucida (strain TAC 125).